We begin with the raw amino-acid sequence, 226 residues long: UPF0758 protein M28_Spy0816 (226 aa).

Residues 103–225 (SVLTSVQVAE…YYSFREKSTL (123 aa)) form the MPN domain. Positions 174, 176, and 187 each coordinate Zn(2+). The JAMM motif motif lies at 174–187 (HNHPSGNIEPSSND).

This sequence belongs to the UPF0758 family.

The protein is UPF0758 protein M28_Spy0816 of Streptococcus pyogenes serotype M28 (strain MGAS6180).